Consider the following 210-residue polypeptide: Capsid protein (210 aa).

The segment covering 1-14 has biased composition (basic residues); the sequence is MARLPKRKNRRNEK. A disordered region spans residues 1–21; sequence MARLPKRKNRRNEKKKNANAS.

The protein resides in the virion. Its function is as follows. Capsid protein self-assembles to form a baciliform capsid with a T=1 symmetry, about 18 nm in diameter. The capsid encapsulates three genomic RNAs (Potential). The sequence is that of Capsid protein from Cucumis melo (Muskmelon).